The sequence spans 555 residues: 2-succinyl-5-enolpyruvyl-6-hydroxy-3-cyclohexene-1-carboxylate synthase (555 aa).

It belongs to the TPP enzyme family. MenD subfamily. Homodimer. It depends on Mg(2+) as a cofactor. Mn(2+) serves as cofactor. The cofactor is thiamine diphosphate.

It catalyses the reaction isochorismate + 2-oxoglutarate + H(+) = 5-enolpyruvoyl-6-hydroxy-2-succinyl-cyclohex-3-ene-1-carboxylate + CO2. It participates in quinol/quinone metabolism; 1,4-dihydroxy-2-naphthoate biosynthesis; 1,4-dihydroxy-2-naphthoate from chorismate: step 2/7. Its pathway is quinol/quinone metabolism; menaquinone biosynthesis. In terms of biological role, catalyzes the thiamine diphosphate-dependent decarboxylation of 2-oxoglutarate and the subsequent addition of the resulting succinic semialdehyde-thiamine pyrophosphate anion to isochorismate to yield 2-succinyl-5-enolpyruvyl-6-hydroxy-3-cyclohexene-1-carboxylate (SEPHCHC). This is 2-succinyl-5-enolpyruvyl-6-hydroxy-3-cyclohexene-1-carboxylate synthase from Kineococcus radiotolerans (strain ATCC BAA-149 / DSM 14245 / SRS30216).